Reading from the N-terminus, the 404-residue chain is Putative Peroxidase 48 (404 aa).

A signal peptide spans 1-18 (MRFLGDYKFALLTCSVIA). Disulfide bonds link C77-C156, C110-C115, C162-C397, and C241-C273. H108 serves as the catalytic Proton acceptor. Residues D109, I112, G114, D116, and S118 each contribute to the Ca(2+) site. N136 is a glycosylation site (N-linked (GlcNAc...) asparagine). P204 contributes to the substrate binding site. H234 lines the heme b pocket. S235 serves as a coordination point for Ca(2+). N250 is a glycosylation site (N-linked (GlcNAc...) asparagine). Residues 276-307 (SVSTSSPSAPPDIGLPPSLPASDSENSYGMSS) are disordered. Over residues 283-294 (SAPPDIGLPPSL) the composition is skewed to pro residues. D287 provides a ligand contact to Ca(2+). Polar residues predominate over residues 296–307 (ASDSENSYGMSS).

The protein belongs to the peroxidase family. Classical plant (class III) peroxidase subfamily. The cofactor is heme b. Ca(2+) is required as a cofactor.

It localises to the secreted. The enzyme catalyses 2 a phenolic donor + H2O2 = 2 a phenolic radical donor + 2 H2O. Removal of H(2)O(2), oxidation of toxic reductants, biosynthesis and degradation of lignin, suberization, auxin catabolism, response to environmental stresses such as wounding, pathogen attack and oxidative stress. These functions might be dependent on each isozyme/isoform in each plant tissue. The chain is Putative Peroxidase 48 (PER48) from Arabidopsis thaliana (Mouse-ear cress).